Here is a 178-residue protein sequence, read N- to C-terminus: Cytochrome b6-f complex iron-sulfur subunit (178 aa).

A helical membrane pass occupies residues 20-42; that stretch reads LLTFGTATGVALGALYPVANYFM. The Rieske domain occupies 65–161; the sequence is KTGWLATHQA…VDIEDDAVLV (97 aa). [2Fe-2S] cluster is bound by residues C107, H109, C125, and H128. C112 and C127 are oxidised to a cystine.

It belongs to the Rieske iron-sulfur protein family. As to quaternary structure, the 4 large subunits of the cytochrome b6-f complex are cytochrome b6, subunit IV (17 kDa polypeptide, PetD), cytochrome f and the Rieske protein, while the 4 small subunits are PetG, PetL, PetM and PetN. The complex functions as a dimer. It depends on [2Fe-2S] cluster as a cofactor.

It is found in the cellular thylakoid membrane. It carries out the reaction 2 oxidized [plastocyanin] + a plastoquinol + 2 H(+)(in) = 2 reduced [plastocyanin] + a plastoquinone + 4 H(+)(out). Functionally, component of the cytochrome b6-f complex, which mediates electron transfer between photosystem II (PSII) and photosystem I (PSI), cyclic electron flow around PSI, and state transitions. This Prochlorococcus marinus (strain MIT 9312) protein is Cytochrome b6-f complex iron-sulfur subunit.